A 187-amino-acid polypeptide reads, in one-letter code: Large ribosomal subunit protein uL6 (187 aa).

It belongs to the universal ribosomal protein uL6 family. In terms of assembly, part of the 50S ribosomal subunit.

Its function is as follows. This protein binds to the 23S rRNA, and is important in its secondary structure. It is located near the subunit interface in the base of the L7/L12 stalk, and near the tRNA binding site of the peptidyltransferase center. The chain is Large ribosomal subunit protein uL6 from Chloroflexus aggregans (strain MD-66 / DSM 9485).